A 200-amino-acid polypeptide reads, in one-letter code: Small ribosomal subunit protein uS4c (200 aa).

An S4 RNA-binding domain is found at 88–148 (IRLDNTIFNL…PKSYYIFKLC (61 aa)).

It belongs to the universal ribosomal protein uS4 family. In terms of assembly, part of the 30S ribosomal subunit.

It localises to the plastid. Its subcellular location is the apicoplast. One of the primary rRNA binding proteins, it binds directly to 16S rRNA where it nucleates assembly of the body of the 30S subunit. This Eimeria tenella (Coccidian parasite) protein is Small ribosomal subunit protein uS4c (rps4).